Here is a 364-residue protein sequence, read N- to C-terminus: Fructose-bisphosphate aldolase A (364 aa).

Phosphothreonine is present on Thr9. Phosphoserine is present on residues Ser36 and Ser39. Lys42 is subject to N6-acetyllysine; alternate. A Glycyl lysine isopeptide (Lys-Gly) (interchain with G-Cter in SUMO1); alternate cross-link involves residue Lys42. Lys42 participates in a covalent cross-link: Glycyl lysine isopeptide (Lys-Gly) (interchain with G-Cter in SUMO2); alternate. Beta-D-fructose 1,6-bisphosphate is bound at residue Arg43. Residue Ser46 is modified to Phosphoserine. Lys99 is modified (N6-(2-hydroxyisobutyryl)lysine). Lys108 carries the N6-acetyllysine modification. An N6-acetyllysine; alternate modification is found at Lys111. An N6-malonyllysine; alternate modification is found at Lys111. Phosphoserine is present on Ser132. Position 147 is an N6-(2-hydroxyisobutyryl)lysine (Lys147). Glu188 (proton acceptor) is an active-site residue. Catalysis depends on Lys230, which acts as the Schiff-base intermediate with dihydroxyacetone-P. Phosphoserine is present on Ser272. Beta-D-fructose 1,6-bisphosphate is bound by residues 272-274, Ser301, and Arg304; that span reads SGG. Position 312 is an N6-malonyllysine (Lys312). Residue Lys330 is modified to N6-acetyllysine. At Asn361 the chain carries Deamidated asparagine; in form beta.

This sequence belongs to the class I fructose-bisphosphate aldolase family. As to quaternary structure, homotetramer. Interacts with SNX9 and WAS. Interacts with FBP2; the interaction blocks FBP2 inhibition by physiological concentrations of AMP and reduces inhibition by Ca(2+). Post-translationally, asn-361 in form alpha is deaminated to Asp in form beta.

It localises to the cytoplasm. The protein resides in the myofibril. The protein localises to the sarcomere. Its subcellular location is the i band. It is found in the m line. It carries out the reaction beta-D-fructose 1,6-bisphosphate = D-glyceraldehyde 3-phosphate + dihydroxyacetone phosphate. Its pathway is carbohydrate degradation; glycolysis; D-glyceraldehyde 3-phosphate and glycerone phosphate from D-glucose: step 4/4. Its function is as follows. Plays a key role in glycolysis and gluconeogenesis. In addition, may also function as scaffolding protein. The polypeptide is Fructose-bisphosphate aldolase A (ALDOA) (Oryctolagus cuniculus (Rabbit)).